We begin with the raw amino-acid sequence, 86 residues long: Progonadoliberin-2 (86 aa).

Residues 1–24 form the signal peptide; that stretch reads MVSVCRLLLVAALLLCLQAQLSFS. Pyrrolidone carboxylic acid is present on glutamine 25. Glycine 34 carries the post-translational modification Glycine amide.

This sequence belongs to the GnRH family.

It is found in the secreted. Functionally, stimulates the secretion of gonadotropins. The protein is Progonadoliberin-2 (gnrh2) of Clarias gariepinus (North African catfish).